Consider the following 1326-residue polypeptide: Probable serine/threonine-protein kinase gdt8 (1326 aa).

The N-terminal stretch at 1-22 (MINKILIKLITIIIFCFSFLFA) is a signal peptide. The Extracellular segment spans residues 23-782 (EEDLIRTPPG…VDRNENLELK (760 aa)). Disordered stretches follow at residues 419–467 (VDQN…GNQG) and 731–762 (EPPTETPTETPTETPTETPTDTPTQTPTQTPI). Low complexity-rich tracts occupy residues 422 to 460 (NNNNNNNNNNNNNNNNNNNNNNNNNNNNNNNNNNNNNNN) and 731 to 761 (EPPTETPTETPTETPTETPTDTPTQTPTQTP). A helical transmembrane segment spans residues 783–803 (IALPICLSLALLIGIIIMICI). Residues 804–1326 (FKKVQSNSKL…TKEDKDLDEN (523 aa)) are Cytoplasmic-facing. The interval 833-858 (IVSQPPTVIEEKPQDNSKPDDQKLIE) is disordered. A compositionally biased stretch (basic and acidic residues) spans 841 to 858 (IEEKPQDNSKPDDQKLIE). The Protein kinase domain maps to 1036-1292 (IKTEQLIASY…FSEISLHLEI (257 aa)). Residues 1042–1050 (IASYLPSKV) and lysine 1065 each bind ATP. The Proton acceptor role is filled by aspartate 1158. Positions 1301-1326 (MNESEESTSNHNTNSKTKEDKDLDEN) are disordered. Over residues 1316–1326 (KTKEDKDLDEN) the composition is skewed to basic and acidic residues.

In the N-terminal section; belongs to the GDT family. It in the C-terminal section; belongs to the protein kinase superfamily. TKL Ser/Thr protein kinase family.

It localises to the membrane. The catalysed reaction is L-seryl-[protein] + ATP = O-phospho-L-seryl-[protein] + ADP + H(+). It catalyses the reaction L-threonyl-[protein] + ATP = O-phospho-L-threonyl-[protein] + ADP + H(+). The protein is Probable serine/threonine-protein kinase gdt8 (gdt8) of Dictyostelium discoideum (Social amoeba).